We begin with the raw amino-acid sequence, 477 residues long: Glycogen synthase (477 aa).

Position 15 (lysine 15) interacts with ADP-alpha-D-glucose.

The protein belongs to the glycosyltransferase 1 family. Bacterial/plant glycogen synthase subfamily.

The enzyme catalyses [(1-&gt;4)-alpha-D-glucosyl](n) + ADP-alpha-D-glucose = [(1-&gt;4)-alpha-D-glucosyl](n+1) + ADP + H(+). It functions in the pathway glycan biosynthesis; glycogen biosynthesis. Synthesizes alpha-1,4-glucan chains using ADP-glucose. In Streptococcus pneumoniae (strain Hungary19A-6), this protein is Glycogen synthase.